The primary structure comprises 375 residues: Ribosomal RNA large subunit methyltransferase G (375 aa).

This sequence belongs to the methyltransferase superfamily. RlmG family.

Its subcellular location is the cytoplasm. The catalysed reaction is guanosine(1835) in 23S rRNA + S-adenosyl-L-methionine = N(2)-methylguanosine(1835) in 23S rRNA + S-adenosyl-L-homocysteine + H(+). Its function is as follows. Specifically methylates the guanine in position 1835 (m2G1835) of 23S rRNA. In Erwinia tasmaniensis (strain DSM 17950 / CFBP 7177 / CIP 109463 / NCPPB 4357 / Et1/99), this protein is Ribosomal RNA large subunit methyltransferase G.